Here is a 128-residue protein sequence, read N- to C-terminus: L-ectoine synthase (128 aa).

Belongs to the ectoine synthase family.

It catalyses the reaction (2S)-4-acetamido-2-aminobutanoate = L-ectoine + H2O. It participates in amine and polyamine biosynthesis; ectoine biosynthesis; L-ectoine from L-aspartate 4-semialdehyde: step 3/3. Catalyzes the circularization of gamma-N-acetyl-alpha,gamma-diaminobutyric acid (ADABA) to ectoine (1,4,5,6-tetrahydro-2-methyl-4-pyrimidine carboxylic acid), which is an excellent osmoprotectant. The chain is L-ectoine synthase from Aliivibrio fischeri (strain ATCC 700601 / ES114) (Vibrio fischeri).